The following is an 83-amino-acid chain: Mu-theraphotoxin-Hhn2j 3 (83 aa).

An N-terminal signal peptide occupies residues 1–21; the sequence is MKALMFLALAGLVLLFVVGYA. A propeptide spanning residues 22-48 is cleaved from the precursor; the sequence is SESEEKEFPIELLSKIFAVDVFKGEER. 3 disulfides stabilise this stretch: cysteine 50/cysteine 65, cysteine 57/cysteine 70, and cysteine 64/cysteine 77. The residue at position 81 (leucine 81) is a Leucine amide.

This sequence belongs to the neurotoxin 10 (Hwtx-1) family. 15 (Hntx-3) subfamily. As to quaternary structure, monomer. Expressed by the venom gland.

The protein resides in the secreted. Lethal neurotoxin. Selectively blocks tetrodotoxin-sensitive voltage-gated sodium channels (Nav). Does not affect tetrodotoxin-resistant voltage-gated sodium channels or calcium channels. This is Mu-theraphotoxin-Hhn2j 3 from Cyriopagopus hainanus (Chinese bird spider).